Consider the following 218-residue polypeptide: Protein GrpE (218 aa).

The span at 1–21 (MSDKQREAERQQSEDKAHSEA) shows a compositional bias: basic and acidic residues. The interval 1 to 66 (MSDKQREAER…LEEARARAEE (66 aa)) is disordered. The segment covering 24–36 (AEAGQAPEAQAAE) has biased composition (low complexity).

Belongs to the GrpE family. In terms of assembly, homodimer.

The protein resides in the cytoplasm. Participates actively in the response to hyperosmotic and heat shock by preventing the aggregation of stress-denatured proteins, in association with DnaK and GrpE. It is the nucleotide exchange factor for DnaK and may function as a thermosensor. Unfolded proteins bind initially to DnaJ; upon interaction with the DnaJ-bound protein, DnaK hydrolyzes its bound ATP, resulting in the formation of a stable complex. GrpE releases ADP from DnaK; ATP binding to DnaK triggers the release of the substrate protein, thus completing the reaction cycle. Several rounds of ATP-dependent interactions between DnaJ, DnaK and GrpE are required for fully efficient folding. In Alkalilimnicola ehrlichii (strain ATCC BAA-1101 / DSM 17681 / MLHE-1), this protein is Protein GrpE.